Reading from the N-terminus, the 279-residue chain is Serine protease 29 (279 aa).

An N-terminal signal peptide occupies residues 1-17 (MLIQLCLTLFFLGCSIA). The Peptidase S1 domain occupies 31–276 (IVGGHSAPQG…FLPWITQQMQ (246 aa)). C62 and C78 are joined by a disulfide. Catalysis depends on charge relay system residues H77 and D124. 3 cysteine pairs are disulfide-bonded: C158-C234, C191-C215, and C224-C252. An N-linked (GlcNAc...) asparagine glycan is attached at N197. The active-site Charge relay system is the S228. Residue N235 is glycosylated (N-linked (GlcNAc...) asparagine).

The protein belongs to the peptidase S1 family. Homooligomer, heterodimer and heterotetramer. Able to form homo- and hetero- tetrameric structures. Heterotetramer is far more stable than the homotetramer. Expressed in embryos and placenta. Found in uterus especially in glandular epithelium during zona lysis and implantation.

It is found in the secreted. Functionally, involved in embryo hatching and implantation. This is Serine protease 29 (Prss29) from Mus musculus (Mouse).